Consider the following 95-residue polypeptide: High mobility group nucleosome-binding domain-containing protein 3 (95 aa).

Basic and acidic residues-rich tracts occupy residues 1 to 25, 39 to 53, and 62 to 72; these read MPKR…EPTR, PEPK…KEPG, and GKKEEKQEAGK. Positions 1–95 are disordered; that stretch reads MPKRKSPENA…EEVLSTNASH (95 aa). Serine 6 is modified (phosphoserine). Serine 78 carries the post-translational modification Phosphoserine.

The protein belongs to the HMGN family. In terms of assembly, interacts with the ligand binding domain of the thyroid receptor (TR) (in vitro). Requires the presence of thyroid hormone for its interaction. Interacts with transcriptional regulator SEHBP. Interacts with nucleosomes.

The protein resides in the nucleus. Binds to nucleosomes, regulating chromatin structure and consequently, chromatin-dependent processes such as transcription, DNA replication and DNA repair. Affects both insulin and glucagon levels and modulates the expression of pancreatic genes involved in insulin secretion. Regulates the expression of the glucose transporter SLC2A2 by binding specifically to its promoter region and recruiting PDX1 and additional transcription factors. Regulates the expression of SLC6A9, a glycine transporter which regulates the glycine concentration in synaptic junctions in the central nervous system, by binding to its transcription start site. May play a role in ocular development and astrocyte function. This chain is High mobility group nucleosome-binding domain-containing protein 3 (Hmgn3), found in Rattus norvegicus (Rat).